The chain runs to 391 residues: DNA repair protein NreA (391 aa).

The C4-type zinc finger occupies 6-20; the sequence is CAECKGKLLCGRSKC. Residues 382–389 carry the PIP motif motif; it reads QTSLASFF.

It belongs to the Nre family. Interacts with the DNA polymerase sliding clamp (PCNA) via the PIP (PCNA-interacting peptide) motif.

Involved in DNA damage repair. This chain is DNA repair protein NreA, found in Archaeoglobus fulgidus (strain ATCC 49558 / DSM 4304 / JCM 9628 / NBRC 100126 / VC-16).